A 115-amino-acid polypeptide reads, in one-letter code: NAD(P)H-quinone oxidoreductase subunit M (115 aa).

It belongs to the complex I NdhM subunit family. As to quaternary structure, NDH-1 can be composed of about 15 different subunits; different subcomplexes with different compositions have been identified which probably have different functions.

It is found in the cellular thylakoid membrane. It carries out the reaction a plastoquinone + NADH + (n+1) H(+)(in) = a plastoquinol + NAD(+) + n H(+)(out). The catalysed reaction is a plastoquinone + NADPH + (n+1) H(+)(in) = a plastoquinol + NADP(+) + n H(+)(out). Functionally, NDH-1 shuttles electrons from an unknown electron donor, via FMN and iron-sulfur (Fe-S) centers, to quinones in the respiratory and/or the photosynthetic chain. The immediate electron acceptor for the enzyme in this species is believed to be plastoquinone. Couples the redox reaction to proton translocation, and thus conserves the redox energy in a proton gradient. Cyanobacterial NDH-1 also plays a role in inorganic carbon-concentration. The chain is NAD(P)H-quinone oxidoreductase subunit M from Prochlorococcus marinus (strain MIT 9215).